A 404-amino-acid polypeptide reads, in one-letter code: Imidazolonepropionase (404 aa).

Fe(3+)-binding residues include His73 and His75. Residues His73 and His75 each coordinate Zn(2+). Residues Arg82, Tyr145, and His178 each coordinate 4-imidazolone-5-propanoate. An N-formimidoyl-L-glutamate-binding site is contributed by Tyr145. His243 is a Fe(3+) binding site. His243 is a binding site for Zn(2+). Gln246 serves as a coordination point for 4-imidazolone-5-propanoate. Asp318 serves as a coordination point for Fe(3+). Asp318 lines the Zn(2+) pocket. The N-formimidoyl-L-glutamate site is built by Asn320 and Gly322. Ser323 contributes to the 4-imidazolone-5-propanoate binding site.

The protein belongs to the metallo-dependent hydrolases superfamily. HutI family. The cofactor is Zn(2+). Requires Fe(3+) as cofactor.

It localises to the cytoplasm. The catalysed reaction is 4-imidazolone-5-propanoate + H2O = N-formimidoyl-L-glutamate. It participates in amino-acid degradation; L-histidine degradation into L-glutamate; N-formimidoyl-L-glutamate from L-histidine: step 3/3. Its function is as follows. Catalyzes the hydrolytic cleavage of the carbon-nitrogen bond in imidazolone-5-propanoate to yield N-formimidoyl-L-glutamate. It is the third step in the universal histidine degradation pathway. In Bradyrhizobium diazoefficiens (strain JCM 10833 / BCRC 13528 / IAM 13628 / NBRC 14792 / USDA 110), this protein is Imidazolonepropionase.